Reading from the N-terminus, the 263-residue chain is Post-GPI attachment to proteins factor 2 (263 aa).

6 helical membrane passes run 16-36, 69-89, 109-129, 143-163, 180-200, and 208-228; these read FVFC…LLSL, YIWR…AVAF, FLCN…LALT, CFGG…WLFS, YKIL…YLYW, and PGIY…NIFF.

Belongs to the PGAP2 family.

It is found in the golgi apparatus membrane. The protein localises to the endoplasmic reticulum membrane. In terms of biological role, involved in the lipid remodeling steps of GPI-anchor maturation. Required for stable expression of GPI-anchored proteins at the cell surface. The sequence is that of Post-GPI attachment to proteins factor 2 from Caenorhabditis briggsae.